Reading from the N-terminus, the 249-residue chain is uncharacterized protein (249 aa).

This is an uncharacterized protein from Caenorhabditis elegans.